Here is a 216-residue protein sequence, read N- to C-terminus: Chaperone protein TorD (216 aa).

It belongs to the TorD/DmsD family. TorD subfamily.

The protein resides in the cytoplasm. Involved in the biogenesis of TorA. Acts on TorA before the insertion of the molybdenum cofactor and, as a result, probably favors a conformation of the apoenzyme that is competent for acquiring the cofactor. This Ferrimonas balearica (strain DSM 9799 / CCM 4581 / KCTC 23876 / PAT) protein is Chaperone protein TorD.